We begin with the raw amino-acid sequence, 274 residues long: Trypsin-1 (274 aa).

The signal sequence occupies residues 1 to 18; that stretch reads MSNKIAILLAVLVAVVAC. Positions 19–47 are cleaved as a propeptide — activation peptide; sequence AEAQANQRHRLVRPSPSFSPRPRYAVGQR. The region spanning 48-273 is the Peptidase S1 domain; it reads IVGGFEIDVS…VRDWVRENSG (226 aa). A disulfide bridge links cysteine 73 with cysteine 89. Catalysis depends on charge relay system residues histidine 88 and aspartate 133. 2 cysteine pairs are disulfide-bonded: cysteine 198–cysteine 214 and cysteine 225–cysteine 249. Serine 229 (charge relay system) is an active-site residue.

This sequence belongs to the peptidase S1 family. In terms of tissue distribution, constitutively expressed at low level in the gut of adult females. Also expressed in the gut of male and female pupae.

It localises to the secreted. It carries out the reaction Preferential cleavage: Arg-|-Xaa, Lys-|-Xaa.. In terms of biological role, major function may be to aid in digestion of the blood meal. The chain is Trypsin-1 (TRYP1) from Anopheles gambiae (African malaria mosquito).